Here is a 247-residue protein sequence, read N- to C-terminus: ATP synthase subunit a, chloroplastic (247 aa).

Helical transmembrane passes span Q38–V58, V95–L115, I134–S154, L199–L219, and G220–G240.

Belongs to the ATPase A chain family. F-type ATPases have 2 components, CF(1) - the catalytic core - and CF(0) - the membrane proton channel. CF(1) has five subunits: alpha(3), beta(3), gamma(1), delta(1), epsilon(1). CF(0) has four main subunits: a, b, b' and c.

It is found in the plastid. It localises to the chloroplast thylakoid membrane. In terms of biological role, key component of the proton channel; it plays a direct role in the translocation of protons across the membrane. This Sorghum bicolor (Sorghum) protein is ATP synthase subunit a, chloroplastic.